A 93-amino-acid polypeptide reads, in one-letter code: Exodeoxyribonuclease 7 small subunit (93 aa).

Residues methionine 1–asparagine 22 form a disordered region.

Belongs to the XseB family. Heterooligomer composed of large and small subunits.

The protein localises to the cytoplasm. It catalyses the reaction Exonucleolytic cleavage in either 5'- to 3'- or 3'- to 5'-direction to yield nucleoside 5'-phosphates.. Bidirectionally degrades single-stranded DNA into large acid-insoluble oligonucleotides, which are then degraded further into small acid-soluble oligonucleotides. The protein is Exodeoxyribonuclease 7 small subunit of Burkholderia multivorans (strain ATCC 17616 / 249).